A 296-amino-acid chain; its full sequence is Tuberculosinyl adenosine transferase (296 aa).

Belongs to the diterpene synthase family. Homodimer. Mg(2+) is required as a cofactor.

It carries out the reaction tuberculosinyl diphosphate + adenosine + H(+) = 1-tuberculosinyladenosine + diphosphate. The enzyme catalyses tuberculosinyl diphosphate + H2O = tuberculosinol + diphosphate. It catalyses the reaction tuberculosinyl diphosphate + H2O = (13R)-edaxadiene + diphosphate. The catalysed reaction is tuberculosinyl diphosphate + H2O = (13S)-edaxadiene + diphosphate. Functionally, tuberculosinyl transferase that catalyzes the condensation of adenosine and tuberculosinyl diphosphate (TbPP) to generate 1-tuberculosinyladenosine (1-TbAd), which acts as an antiacid that directly protects M.tuberculosis from acid pH and physically remodels M.tuberculosis phagolysosomes. In addition, acts as a phosphatase that catalyzes the diphosphate-removal from TbPP to produce both tuberculosinol (TOH) and isotuberculosinol (iso-TOH). This is Tuberculosinyl adenosine transferase from Mycobacterium tuberculosis (strain CDC 1551 / Oshkosh).